Reading from the N-terminus, the 158-residue chain is Glycine-rich RNA-binding protein 2, mitochondrial (158 aa).

A mitochondrion-targeting transit peptide spans 1–34 (MAFCNKLGGLLRQNISSNGNVPVTSMLGSLRLMS). The 79-residue stretch at 35 to 113 (TKLFIGGLSW…RHIRVNPAND (79 aa)) folds into the RRM domain. Ser43 bears the Phosphoserine mark. A glycine-rich (GR) required for cell-to-cell movement region spans residues 122–157 (GGGGGYSGGGGGYGGGGGGYGGGGGGYGGGGDGGGG).

This sequence belongs to the GR-RBP family. As to quaternary structure, binds to small phloem-mobile single-stranded RNAs (ss-sRNA, e.g. small interfering RNA (siRNA) and microRNA (miRNA)) in the phloeme exudate, including viral-derived sRNA (vsiRNA). Interacts with ORRM2, RBG3/ORRM3 and RBG5/ORRM4.

The protein localises to the mitochondrion. Its subcellular location is the secreted. In terms of biological role, promotes the cis-splicing and editing of several mitochondrial RNAs (including NAD5 transcripts). Plays a role in RNA transcription or processing during stress. Binds RNAs and DNAs sequence with a preference to single-stranded nucleic acids. Displays strong affinity to poly(U) sequence. Exerts cold and freezing tolerance, probably by exhibiting an RNA chaperone activity during the cold and freezing adaptation process. Mediates cell-to-cell trafficking of RNA interference (RNAi) signals (small RNAs (sRNA), e.g. small interfering RNA (siRNA) and microRNA (miRNA)) which regulate growth and development, as well as responses to environmental inputs, including pathogen attack; can compromise zucchini yellow mosaic virus (ZYMV) and tobacco rattle virus (TRV) infections at the early stage. This chain is Glycine-rich RNA-binding protein 2, mitochondrial, found in Arabidopsis thaliana (Mouse-ear cress).